The sequence spans 120 residues: Host cell factor C1 regulator 1 (120 aa).

The interval M1–L30 is disordered. Positions T20–L30 are enriched in polar residues. The interval D58–Y61 is interaction with HCFC1. Residues I92–L101 carry the Nuclear export signal motif.

As to quaternary structure, interacts with HCFC1.

It is found in the cytoplasm. The protein resides in the nucleus. In terms of biological role, regulates HCFC1 activity by modulating its subcellular localization. Overexpression of HCFC1R1 leads to accumulation of HCFC1 in the cytoplasm. HCFC1R1-mediated export may provide the pool of cytoplasmic HCFC1 required for import of virion-derived VP16 into the nucleus. This is Host cell factor C1 regulator 1 (Hcfc1r1) from Mus musculus (Mouse).